Reading from the N-terminus, the 315-residue chain is 2-oxoglutarate and iron-dependent oxygenase domain-containing protein 3 (315 aa).

The interval M1–L31 is disordered. Topologically, residues M1–R41 are cytoplasmic. The segment covering A18 to L31 has biased composition (basic and acidic residues). The chain crosses the membrane as a helical; Signal-anchor for type II membrane protein span at residues I42–I62. At D63–T315 the chain is on the lumenal side. Residues K203 to P305 form the Fe2OG dioxygenase domain. N211 carries N-linked (GlcNAc...) asparagine glycosylation. Fe cation-binding residues include H226 and D228. An N-linked (GlcNAc...) asparagine glycan is attached at N263. A Fe cation-binding site is contributed by H284. The active site involves R294. Residue R294 coordinates 2-oxoglutarate.

The protein belongs to the OGFOD3 family. It depends on Fe(2+) as a cofactor. L-ascorbate is required as a cofactor.

Its subcellular location is the membrane. The protein is 2-oxoglutarate and iron-dependent oxygenase domain-containing protein 3 (Ogfod3) of Mus musculus (Mouse).